Consider the following 529-residue polypeptide: NAD(P)H-quinone oxidoreductase chain 4 1 (529 aa).

Helical transmembrane passes span 4–24, 36–56, 91–111, 115–135, 137–157, 169–189, 209–229, 243–263, 277–297, 314–334, 335–355, 387–407, and 417–437; these read FPWL…IPFI, WYAL…FTNF, LILL…PVTL, LFYF…AVQD, LVFF…LAIW, FILY…AMAF, GFQL…LPIV, TAPV…YALI, FAPV…LTSY, IGFV…GAVL, QMVS…ATYD, LALP…GFAT, and VIVV…LLSM.

The protein belongs to the complex I subunit 4 family.

Its subcellular location is the cellular thylakoid membrane. The catalysed reaction is a plastoquinone + NADH + (n+1) H(+)(in) = a plastoquinol + NAD(+) + n H(+)(out). The enzyme catalyses a plastoquinone + NADPH + (n+1) H(+)(in) = a plastoquinol + NADP(+) + n H(+)(out). NDH-1 shuttles electrons from NAD(P)H, via FMN and iron-sulfur (Fe-S) centers, to quinones in the respiratory chain. The immediate electron acceptor for the enzyme in this species is believed to be plastoquinone. Couples the redox reaction to proton translocation (for every two electrons transferred, four hydrogen ions are translocated across the cytoplasmic membrane), and thus conserves the redox energy in a proton gradient. The chain is NAD(P)H-quinone oxidoreductase chain 4 1 from Thermosynechococcus vestitus (strain NIES-2133 / IAM M-273 / BP-1).